A 56-amino-acid polypeptide reads, in one-letter code: Large ribosomal subunit protein bL33 (56 aa).

The protein belongs to the bacterial ribosomal protein bL33 family.

In Beutenbergia cavernae (strain ATCC BAA-8 / DSM 12333 / CCUG 43141 / JCM 11478 / NBRC 16432 / NCIMB 13614 / HKI 0122), this protein is Large ribosomal subunit protein bL33.